We begin with the raw amino-acid sequence, 513 residues long: ATP synthase subunit alpha (513 aa).

169 to 176 contributes to the ATP binding site; it reads GDRQTGKT.

Belongs to the ATPase alpha/beta chains family. In terms of assembly, F-type ATPases have 2 components, CF(1) - the catalytic core - and CF(0) - the membrane proton channel. CF(1) has five subunits: alpha(3), beta(3), gamma(1), delta(1), epsilon(1). CF(0) has three main subunits: a(1), b(2) and c(9-12). The alpha and beta chains form an alternating ring which encloses part of the gamma chain. CF(1) is attached to CF(0) by a central stalk formed by the gamma and epsilon chains, while a peripheral stalk is formed by the delta and b chains.

Its subcellular location is the cell inner membrane. The enzyme catalyses ATP + H2O + 4 H(+)(in) = ADP + phosphate + 5 H(+)(out). Functionally, produces ATP from ADP in the presence of a proton gradient across the membrane. The alpha chain is a regulatory subunit. This Tolumonas auensis (strain DSM 9187 / NBRC 110442 / TA 4) protein is ATP synthase subunit alpha.